The primary structure comprises 469 residues: MSALTPPTDMPTPTTDKITQAAMETIYLCKFRVSMDGEWLCLRELDDISLTPDPEPTHEDPNYLMANERMNLMNMAKLSIKGLIESALNLGRTLDSDYAPLQQFFVVMEHCLKHGLKAKKTFLGQNKSFWGPLELVEKLVPEAAEITASVKDLPGLKTPVGRGRAWLRLALMQKKLSEYMKALINKKELLSEFYEPNALMMEEEGAIIAGLLVGLNVIDANFCMKGEDLDSQVGVIDFSMYLKDGNSSKGTEGDGQITAILDQKNYVEELNRHLNATVNNLQAKVDALEKSNTKLTEELAVANNRIITLQEEMERVKEESSYILESNRKGPKQDRTAEGQALSEARKHLKEETQLRLDVEKELEMQISMRQEMELAMKMLEKDVCEKQDALVSLRQQLDDLRALKHELAFKLQSSDLGVKQKSELNSRLEEKTNQMAATIKQLEQSEKDLVKQAKTLNSAANKLIPKHH.

Phosphothreonine occurs at positions 5 and 12. A phosphoserine mark is found at Ser-34 and Ser-49. Position 51 is a phosphothreonine (Thr-51). Positions Asp-95–Glu-227 constitute an RUN domain. 2 coiled-coil regions span residues Asn-271–Glu-362 and Lys-422–Lys-463.

Interacts with PAK1. Interacts (via C-terminus) with Ras-related Rab-5 proteins. Interacts (via C-terminus) with Ras-related Rap-2 proteins. Interacts with PIK3CA and PIK3R1. Interacts (via N-terminus) with FSCN1; this interaction induces neuron axon development. Interacts with DBN1. Interacts (via the second coiled coil) with GTP-, but not GDP-bound ARL8A and ARL8B. Interacts with dynactin/DCTN1 and the dynein intermediate chain DYNC1I1/2. Directly interacts with DYNC1LI1. Phosphorylated by PAK1. Isoform 1 is partially phosphorylated. As to expression, overexpressed in gastric cancer cells and tissues (at protein level).

It localises to the cytoplasm. The protein resides in the endomembrane system. The protein localises to the cell projection. It is found in the invadopodium. Its subcellular location is the perikaryon. It localises to the growth cone. The protein resides in the filopodium. The protein localises to the lamellipodium. It is found in the lysosome. ARL8 effector that promotes the coupling of endolysosomes to dynein-dynactin for retrograde transport along microtubules. Acts by binding both GTP-bound ARL8 and dynein-dynactin. In nonneuronal cells, promotes concentration of endolysosomes in the juxtanuclear area. In hippocampal neurons, drives retrograde transport of endolysosomes from the axon to the soma. Plays a role in the generation of neuronal polarity formation and axon growth. Implicated in the formation of a single axon by developing neurons. May inhibit the formation of additional axons by inhibition of PI3K in minor neuronal processes. Plays a role in the formation of F-actin-enriched protrusive structures at the cell periphery. Plays a role in cytoskeletal organization by regulating the subcellular localization of FSCN1 and DBN1 at axonal growth cones. The sequence is that of Protein RUFY3 from Homo sapiens (Human).